A 344-amino-acid chain; its full sequence is Anthranilate phosphoribosyltransferase (344 aa).

5-phospho-alpha-D-ribose 1-diphosphate is bound by residues glycine 81, 84-85 (GD), serine 89, 91-94 (NIST), 109-117 (KHGNRALSS), and alanine 121. Residue glycine 81 coordinates anthranilate. Serine 93 contributes to the Mg(2+) binding site. Asparagine 112 lines the anthranilate pocket. Arginine 167 contributes to the anthranilate binding site. Mg(2+) is bound by residues aspartate 226 and glutamate 227.

It belongs to the anthranilate phosphoribosyltransferase family. Homodimer. It depends on Mg(2+) as a cofactor.

The catalysed reaction is N-(5-phospho-beta-D-ribosyl)anthranilate + diphosphate = 5-phospho-alpha-D-ribose 1-diphosphate + anthranilate. It functions in the pathway amino-acid biosynthesis; L-tryptophan biosynthesis; L-tryptophan from chorismate: step 2/5. In terms of biological role, catalyzes the transfer of the phosphoribosyl group of 5-phosphorylribose-1-pyrophosphate (PRPP) to anthranilate to yield N-(5'-phosphoribosyl)-anthranilate (PRA). This Azorhizobium caulinodans (strain ATCC 43989 / DSM 5975 / JCM 20966 / LMG 6465 / NBRC 14845 / NCIMB 13405 / ORS 571) protein is Anthranilate phosphoribosyltransferase.